The following is a 159-amino-acid chain: GDP-mannose mannosyl hydrolase (159 aa).

Substrate-binding positions include 2–3 (FL), Phe8, and Arg36. Residues 13–153 (RSTPLVSLDF…SRAYFLAEKR (141 aa)) form the Nudix hydrolase domain. Gly49, Glu69, and Gln122 together coordinate Mg(2+). A Nudix box motif is present at residues 50–71 (GRVQKDETLEAAFERLTMAELG).

Homodimer. It depends on Mg(2+) as a cofactor.

The enzyme catalyses GDP-alpha-D-mannose + H2O = D-mannose + GDP + H(+). Functionally, hydrolyzes both GDP-mannose and GDP-glucose. Could participate in the regulation of cell wall biosynthesis by influencing the concentration of GDP-mannose or GDP-glucose in the cell. Might also be involved in the biosynthesis of the slime polysaccharide colanic acid. The polypeptide is GDP-mannose mannosyl hydrolase (Escherichia coli (strain K12)).